The primary structure comprises 264 residues: 3-methyl-2-oxobutanoate hydroxymethyltransferase (264 aa).

2 residues coordinate Mg(2+): D45 and D84. 3-methyl-2-oxobutanoate contacts are provided by residues D45–S46, D84, and K112. Residue E114 coordinates Mg(2+). Catalysis depends on E181, which acts as the Proton acceptor.

The protein belongs to the PanB family. In terms of assembly, homodecamer; pentamer of dimers. The cofactor is Mg(2+).

The protein localises to the cytoplasm. The catalysed reaction is 3-methyl-2-oxobutanoate + (6R)-5,10-methylene-5,6,7,8-tetrahydrofolate + H2O = 2-dehydropantoate + (6S)-5,6,7,8-tetrahydrofolate. It participates in cofactor biosynthesis; (R)-pantothenate biosynthesis; (R)-pantoate from 3-methyl-2-oxobutanoate: step 1/2. In terms of biological role, catalyzes the reversible reaction in which hydroxymethyl group from 5,10-methylenetetrahydrofolate is transferred onto alpha-ketoisovalerate to form ketopantoate. This chain is 3-methyl-2-oxobutanoate hydroxymethyltransferase, found in Alteromonas mediterranea (strain DSM 17117 / CIP 110805 / LMG 28347 / Deep ecotype).